A 168-amino-acid polypeptide reads, in one-letter code: MAKKSIKVVVEGGNVKPGPPLAPTLSQLGLNVGEVVKKINEATSQFKGMTVPVTLDVDTDTKKYEVSVGVPTTTSLLVKKAGASGPSGDPEHKKIGNISMDDVIEVAISKKPSLTAKELKGAVKSILGTAKSIGLTVDNKDPKLVVREVEEGKYDDKIKEMEEKWSSG.

The protein belongs to the universal ribosomal protein uL11 family. As to quaternary structure, part of the ribosomal stalk of the 50S ribosomal subunit. Interacts with L10 and the large rRNA to form the base of the stalk. L10 forms an elongated spine to which L12 dimers bind in a sequential fashion forming a multimeric L10(L12)X complex.

In terms of biological role, forms part of the ribosomal stalk which helps the ribosome interact with GTP-bound translation factors. This Metallosphaera sedula (strain ATCC 51363 / DSM 5348 / JCM 9185 / NBRC 15509 / TH2) protein is Large ribosomal subunit protein uL11.